The following is an 844-amino-acid chain: Beta-mannosidase B (844 aa).

Residue E432 is the Proton donor of the active site.

Belongs to the glycosyl hydrolase 2 family. Beta-mannosidase B subfamily.

The catalysed reaction is Hydrolysis of terminal, non-reducing beta-D-mannose residues in beta-D-mannosides.. Its pathway is glycan metabolism; N-glycan degradation. Its function is as follows. Exoglycosidase that cleaves the single beta-linked mannose residue from the non-reducing end of beta-mannosidic oligosaccharides of various complexity and length. Prefers mannobiose over mannotriose and has no activity against polymeric mannan. Is also severely restricted by galactosyl substitutions at the +1 subsite. The polypeptide is Beta-mannosidase B (mndB) (Aspergillus oryzae (strain ATCC 42149 / RIB 40) (Yellow koji mold)).